Reading from the N-terminus, the 81-residue chain is Large ribosomal subunit protein bL31B (81 aa).

It belongs to the bacterial ribosomal protein bL31 family. Type B subfamily. In terms of assembly, part of the 50S ribosomal subunit.

This is Large ribosomal subunit protein bL31B from Bacillus cereus (strain G9842).